The following is a 493-amino-acid chain: Probable cytosol aminopeptidase (493 aa).

Mn(2+) is bound by residues K262 and D267. K274 is an active-site residue. The Mn(2+) site is built by D285, D344, and E346. The active site involves R348.

This sequence belongs to the peptidase M17 family. It depends on Mn(2+) as a cofactor.

The protein localises to the cytoplasm. The enzyme catalyses Release of an N-terminal amino acid, Xaa-|-Yaa-, in which Xaa is preferably Leu, but may be other amino acids including Pro although not Arg or Lys, and Yaa may be Pro. Amino acid amides and methyl esters are also readily hydrolyzed, but rates on arylamides are exceedingly low.. It catalyses the reaction Release of an N-terminal amino acid, preferentially leucine, but not glutamic or aspartic acids.. Functionally, presumably involved in the processing and regular turnover of intracellular proteins. Catalyzes the removal of unsubstituted N-terminal amino acids from various peptides. This is Probable cytosol aminopeptidase from Xanthomonas campestris pv. campestris (strain 8004).